We begin with the raw amino-acid sequence, 453 residues long: Ribulose bisphosphate carboxylase large chain (453 aa).

Positions 1–2 (MS) are excised as a propeptide. Proline 3 is subject to N-acetylproline. Lysine 14 is modified (N6,N6,N6-trimethyllysine). The substrate site is built by asparagine 123 and threonine 173. The active-site Proton acceptor is the lysine 175. Lysine 177 serves as a coordination point for substrate. Residues lysine 201, aspartate 203, and glutamate 204 each contribute to the Mg(2+) site. Lysine 201 is subject to N6-carboxylysine. The Proton acceptor role is filled by histidine 294. Residues arginine 295, histidine 327, and serine 379 each contribute to the substrate site.

Belongs to the RuBisCO large chain family. Type I subfamily. In terms of assembly, heterohexadecamer of 8 large chains and 8 small chains; disulfide-linked. The disulfide link is formed within the large subunit homodimers. The cofactor is Mg(2+). In terms of processing, the disulfide bond which can form in the large chain dimeric partners within the hexadecamer appears to be associated with oxidative stress and protein turnover.

It is found in the plastid. The protein localises to the chloroplast. It carries out the reaction 2 (2R)-3-phosphoglycerate + 2 H(+) = D-ribulose 1,5-bisphosphate + CO2 + H2O. It catalyses the reaction D-ribulose 1,5-bisphosphate + O2 = 2-phosphoglycolate + (2R)-3-phosphoglycerate + 2 H(+). RuBisCO catalyzes two reactions: the carboxylation of D-ribulose 1,5-bisphosphate, the primary event in carbon dioxide fixation, as well as the oxidative fragmentation of the pentose substrate in the photorespiration process. Both reactions occur simultaneously and in competition at the same active site. In Sherardia arvensis (Blue field-madder), this protein is Ribulose bisphosphate carboxylase large chain.